The sequence spans 404 residues: E3 ubiquitin-protein ligase RNF128 (404 aa).

Positions M1–A31 are cleaved as a signal peptide. Positions D62–I166 constitute a PA domain. Residues I191–F211 traverse the membrane as a helical segment. The segment at C260–K301 adopts an RING-type; atypical zinc-finger fold. Residues I336 to G356 are disordered.

Post-translationally, auto-ubiquitinated. Expressed in the cement gland, cranial placodes, and the pronephros.

The protein resides in the endomembrane system. Its subcellular location is the cytoplasm. It is found in the perinuclear region. It catalyses the reaction S-ubiquitinyl-[E2 ubiquitin-conjugating enzyme]-L-cysteine + [acceptor protein]-L-lysine = [E2 ubiquitin-conjugating enzyme]-L-cysteine + N(6)-ubiquitinyl-[acceptor protein]-L-lysine.. Its pathway is protein modification; protein ubiquitination. In terms of biological role, E3 ubiquitin-protein ligase that catalyzes polyubiquitin chains. Converts epidermis into cement gland and neural tissue in whole embryos. This Xenopus laevis (African clawed frog) protein is E3 ubiquitin-protein ligase RNF128 (rnf128).